The sequence spans 213 residues: Probable nicotinate-nucleotide adenylyltransferase (213 aa).

Belongs to the NadD family.

It carries out the reaction nicotinate beta-D-ribonucleotide + ATP + H(+) = deamido-NAD(+) + diphosphate. It participates in cofactor biosynthesis; NAD(+) biosynthesis; deamido-NAD(+) from nicotinate D-ribonucleotide: step 1/1. Functionally, catalyzes the reversible adenylation of nicotinate mononucleotide (NaMN) to nicotinic acid adenine dinucleotide (NaAD). This chain is Probable nicotinate-nucleotide adenylyltransferase, found in Escherichia coli O17:K52:H18 (strain UMN026 / ExPEC).